Consider the following 128-residue polypeptide: uncharacterized protein (128 aa).

One can recognise a VOC domain in the interval 2-127 (KLLQIRLLVN…DHNLIEIYKM (126 aa)). Ni(2+) is bound by residues glutamate 48 and glutamate 123.

The protein belongs to the glyoxalase I family.

This is an uncharacterized protein from Bacillus subtilis (strain 168).